A 276-amino-acid chain; its full sequence is Formamidopyrimidine-DNA glycosylase (276 aa).

Catalysis depends on Pro-2, which acts as the Schiff-base intermediate with DNA. Residue Glu-3 is the Proton donor of the active site. Lys-58 functions as the Proton donor; for beta-elimination activity in the catalytic mechanism. Residues His-94, Arg-112, and Arg-157 each contribute to the DNA site. The segment at 242 to 276 adopts an FPG-type zinc-finger fold; sequence FVYDRAGEPCRVCGAPIRQIVQGQRSTYYCPNCQR. Arg-266 functions as the Proton donor; for delta-elimination activity in the catalytic mechanism.

It belongs to the FPG family. In terms of assembly, monomer. Zn(2+) is required as a cofactor.

The catalysed reaction is Hydrolysis of DNA containing ring-opened 7-methylguanine residues, releasing 2,6-diamino-4-hydroxy-5-(N-methyl)formamidopyrimidine.. It carries out the reaction 2'-deoxyribonucleotide-(2'-deoxyribose 5'-phosphate)-2'-deoxyribonucleotide-DNA = a 3'-end 2'-deoxyribonucleotide-(2,3-dehydro-2,3-deoxyribose 5'-phosphate)-DNA + a 5'-end 5'-phospho-2'-deoxyribonucleoside-DNA + H(+). Its function is as follows. Involved in base excision repair of DNA damaged by oxidation or by mutagenic agents. Acts as a DNA glycosylase that recognizes and removes damaged bases. Has a preference for oxidized purines, such as 7,8-dihydro-8-oxoguanine (8-oxoG). Has AP (apurinic/apyrimidinic) lyase activity and introduces nicks in the DNA strand. Cleaves the DNA backbone by beta-delta elimination to generate a single-strand break at the site of the removed base with both 3'- and 5'-phosphates. The chain is Formamidopyrimidine-DNA glycosylase from Burkholderia thailandensis (strain ATCC 700388 / DSM 13276 / CCUG 48851 / CIP 106301 / E264).